Reading from the N-terminus, the 323-residue chain is MSKTLSLQLPWVEKYRPQVLSDIVGNKETIDRLQQIAKDGNMPHMIISGMPGIGKTTSVHCLAHELLGRSYADGVLELNASDDRGIDVVRNQIKHFAQKKLHLPPGKHKIVILDEADSMTAGAQQALRRTMELYSNSTRFAFACNQSNKIIEPLQSRCAILRYSKLSDEDVLKRLLQIIKLEDVKYTNDGLEAIIFTAEGDMRQAINNLQSTVAGHGLVNADNVFKIVDSPHPLIVKKMLLASNLEDSIQILRTDLWKKGYSSIDIVTTSFRVTKNLAQVKESVRLEMIKEIGLTHMRILEGVGTYLQLASMLAKIHKLNNKA.

ATP is bound by residues V12, V24, 49–57 (GMPGIGKTT), N145, and R203.

The protein belongs to the activator 1 small subunits family. In terms of assembly, replication factor C (RFC) is a heteropentamer of subunits RFC1, RFC2, RFC3, RFC4 and RFC5 and forms a complex with POL30/PCNA in the presence of ATP. Component of the RAD24-RFC complex which consists of RAD14, RFC2, RFC3, RFC4 and RFC5 and associates with the checkpoint clamp DDC1:MEC3:RAD17 complex. Component of the ELG1-RFC complex which consists of ELG1, RFC2, RFC3, RFC4 and RFC5. Component of the CTF18-RFC complex, which consists of CTF18, CTF8, DCC1, RFC2, RFC3, RFC4 and RFC5. RFC4 interacts with ECO1.

It localises to the nucleus. Functionally, component of ATP-dependent clamp loader (RFC and RFC-like) complexes for DNA clamps, such as the POL30/PCNA homotrimer and the checkpoint clamp DDC1:MEC3:RAD17 complex. During a clamp loading circle, the RFC:clamp complex binds to DNA and the recognition of the double-stranded/single-stranded junction stimulates ATP hydrolysis by RFC. The complex presumably provides bipartite ATP sites in which one subunit supplies a catalytic site for hydrolysis of ATP bound to the neighboring subunit. Dissociation of RFC from the clamp leaves the clamp encircling DNA. Component of the replication factor C (RFC or activator 1) complex which loads POL30/PCNA and acts during elongation of primed DNA templates by DNA polymerase delta and epsilon. RFC has an essential but redundant activity in sister chromatid cohesion establishment. Component of the RFC-like complex CTF18-RFC which is required for efficient establishment of chromosome cohesion during S-phase and may load or unload POL30/PCNA. Component of the RFC-like RAD24-RFC complex which loads the checkpoint clamp DDC1:MEC3:RAD17 complex and is involved in DNA repair pathways. Component of the RFC-like ELG1-RFC complex which appears to have a role in DNA replication, replication fork re-start, recombination and repair. The polypeptide is Replication factor C subunit 4 (RFC4) (Saccharomyces cerevisiae (strain ATCC 204508 / S288c) (Baker's yeast)).